The following is a 330-amino-acid chain: MPSFVFKSRKLKHTTMQKNYDPRIAQLRGFASLSVAFYHLWTLQILPLSIFRPGWLGVPLFLELSIFLLLQRLDVNSDMKKYFAKRIKRIYPLYYLSATAVFLVELYYFHDHVTIYELFLHYVFLSSVLAPFSFSYVFWTLQLEEWMYLFIPLIHRLSDMRKFLLAVGLILSSFIYGTFIVTLPYNEFHLLYFMPPFWLSAYGWGIIAYILYKNNTKLWSTRSAISFLFLIYVMYLLAPTDNEFLYELTTRVVVYNMVLVVFMLIILNPPKVLSKVSVFLGEISYGIYVWHLLMEELLGVVGILLGVAVAFATEFPLRRKEILLRLRQLG.

Helical transmembrane passes span 29–49 (GFAS…LPLS), 50–70 (IFRP…FLLL), 90–110 (IYPL…YYFH), 118–138 (LFLH…SYVF), 163–183 (FLLA…IVTL), 190–210 (LLYF…IAYI), 225–245 (ISFL…NEFL), 252–272 (VVVY…PPKV), 273–293 (LSKV…WHLL), and 297–317 (LLGV…EFPL).

The protein localises to the host membrane. The sequence is that of Putative acetyltransferase ORF330 from Acidianus convivator (ATV).